The following is a 319-amino-acid chain: Proline hydroxylase buaE (319 aa).

Residues 168–280 form the Fe2OG dioxygenase domain; it reads NSSELRLNHY…RYSIAYFGKP (113 aa). 3 residues coordinate Fe cation: histidine 195, aspartate 197, and histidine 255. Arginine 271 contacts 2-oxoglutarate.

The protein belongs to the iron/ascorbate-dependent oxidoreductase family. The cofactor is Fe(2+).

Its pathway is mycotoxin biosynthesis. Proline hydroxylase; part of the gene cluster that mediates the biosynthesis of burnettramic acids, an unusual class of bolaamphiphilic pyrrolizidinediones that display potent antibacterial, antifungal, and cytotoxic activities. The first step of the biosynthesis of burnettramic acids is the hydroxylation of proline by the proline hydroxylase buaE to generate 4-hydroxyproline. The PKS-NRPS buaA and trans-enoyl reductase buaC construct the highly reduced polyketide chain, and the condensation (C) domain of buaA then catalyzes the amide bond formation with the activated 4-hydroxyproline. This is followed by the R domain releasing the nascent polyketide-peptide directly via a Dieckmann condensation to afford a tetramic acid fused to the hydroxyproline, generating the bicyclic pyrrolidinedione moiety. The cytochrome P450 monooxygenases buaD and buaG are likely responsible for the multiple hydroxylations on the polyketide chain and its terminus, although in the heterologous context, buaD does not appear to be required. Therefore, while buaG may be a multifunctional cytochrome P450 monooxygenase, it cannot be ruled out that the two secondary alcohols on the polyketide chain could have an acetate origin. Finally, the glycosyltransferase buaB transfers beta-D-mannose to the aglycone burnettramic acid A to form burnettramic acid A. Burnettramic acid B is a minor cis-pyrrolizidine epimer of burnettramic acid A and it is likely that small amounts of it form naturally in acidic environments. This Petromyces alliaceus (Aspergillus alliaceus) protein is Proline hydroxylase buaE.